Reading from the N-terminus, the 708-residue chain is Leukotoxin translocation ATP-binding protein LktB (708 aa).

The 126-residue stretch at 1 to 126 folds into the Peptidase C39 domain; the sequence is MEANHQRNDL…ACYQGQLILV (126 aa). An ABC transmembrane type-1 domain is found at 155–437; sequence FLETLIVSIF…LAQLWQDFQQ (283 aa). 5 helical membrane passes run 159–179, 192–212, 270–290, 296–316, and 389–409; these read LIVSIFLQIFALITPLFFQVV, LNIITVALAIVIIFEIVLSGL, ALTSVLDLLFSFIFFAVMWYY, LVILGSLPFYILWSIFISPIL, and VMVINLWLGAHLVISGDLSIG. The 236-residue stretch at 469–704 folds into the ABC transporter domain; the sequence is ISFKNIRFRY…SNGLYSYLHQ (236 aa). 503-510 is a binding site for ATP; it reads GRSGSGKS.

This sequence belongs to the ABC transporter superfamily. Protein-1 exporter (TC 3.A.1.109) family. As to quaternary structure, homodimer.

It is found in the cell inner membrane. The enzyme catalyses ATP + H2O + proteinSide 1 = ADP + phosphate + proteinSide 2.. In terms of biological role, part of the ABC transporter complex LktBD involved in leukotoxin export. Transmembrane domains (TMD) form a pore in the inner membrane and the ATP-binding domain (NBD) is responsible for energy generation. This chain is Leukotoxin translocation ATP-binding protein LktB (lktB), found in Bibersteinia trehalosi (Pasteurella trehalosi).